Here is a 206-residue protein sequence, read N- to C-terminus: MKVLVTGFEPFGGEEINPSWEAVKGLPNEIEGADIIKFQLPVTFSGVREILPRLIVKERPDAVILTGQAGGRPNITVERVAINVMDSTMPDNEGYKPEDEPVFEGAPAAYFATIPVKAIVKALREAKIPAAVSNTAGTYVCNAAMFTALHTIEVSGMTTKAGFIHVPFSHEQALDKPRPSMALETIRKGLEIAIKMVFEDLTREGY.

Catalysis depends on residues Glu-78, Cys-141, and His-165.

This sequence belongs to the peptidase C15 family. As to quaternary structure, homotetramer.

It is found in the cytoplasm. It catalyses the reaction Release of an N-terminal pyroglutamyl group from a polypeptide, the second amino acid generally not being Pro.. Its function is as follows. Removes 5-oxoproline from various penultimate amino acid residues except L-proline. In Thermococcus kodakarensis (strain ATCC BAA-918 / JCM 12380 / KOD1) (Pyrococcus kodakaraensis (strain KOD1)), this protein is Pyrrolidone-carboxylate peptidase.